A 65-amino-acid polypeptide reads, in one-letter code: Small ribosomal subunit protein eS17 (65 aa).

This sequence belongs to the eukaryotic ribosomal protein eS17 family.

This chain is Small ribosomal subunit protein eS17, found in Methanobrevibacter smithii (strain ATCC 35061 / DSM 861 / OCM 144 / PS).